Here is a 411-residue protein sequence, read N- to C-terminus: MAEKTEKPTAKKLRDAAKKGQTFKARDIVALIVIATGALAAPALVDLTRIAAEFVRIASTGAQPNPGAYAFAWAKLFLRIAAPFVLLCAAAGALPSLVQSRFTLAVESIRFDLTALDPVKGMKRLFSWRSAKDAVKALLYVGVFALTVRVFADLYHADVFGLFRARPALLGHMWIVLTVRLVLLFLLCALPVLILDAAVEYFLYHRELKMDKHEVKQEYKESEGNHEIKSKRREIHQELLSEEIKANVEQSDFIVANPTHIAIGVYVNPDIVPIPFVSVRETNARALAVIRHAEACGVPVVRNVALARSIYRNSPRRYSFVSHDDIDGVMRVLIWLGEVEAANRGGPPPETRAPTSAEPQARDGVAPPGDACADNAFPDDAPPGAAAPNAGSPDSPAPDGGAPARTGDQNA.

4 consecutive transmembrane segments (helical) span residues 28–48, 80–100, 137–157, and 175–195; these read IVAL…VDLT, IAAP…LVQS, ALLY…LYHA, and IVLT…VLIL. A disordered region spans residues 341–411; that stretch reads AANRGGPPPE…APARTGDQNA (71 aa). Residues 370-404 show a composition bias toward low complexity; sequence DACADNAFPDDAPPGAAAPNAGSPDSPAPDGGAPA.

The protein belongs to the type III secretion exporter family.

It localises to the cell membrane. Part of the bsa type III secretion system, is involved in the intracellular replication of invading bacteria inside the host cell. Probably necessary for the lysis of the vacuole membrane and escape into the host cell cytoplasm. This is Secretion apparatus protein BsaZ (bsaZ) from Burkholderia pseudomallei (strain 1106a).